The primary structure comprises 217 residues: Protein-methionine-sulfoxide reductase heme-binding subunit MsrQ (217 aa).

A run of 4 helical transmembrane segments spans residues 82 to 102 (MLGL…LLVD), 118 to 138 (PFIT…ATST), 150 to 170 (WQWL…HYWW), and 180 to 200 (EVSI…WWVW).

This sequence belongs to the MsrQ family. Heterodimer of a catalytic subunit (MsrP) and a heme-binding subunit (MsrQ). It depends on FMN as a cofactor. The cofactor is heme b.

The protein resides in the cell inner membrane. In terms of biological role, part of the MsrPQ system that repairs oxidized periplasmic proteins containing methionine sulfoxide residues (Met-O), using respiratory chain electrons. Thus protects these proteins from oxidative-stress damage caused by reactive species of oxygen and chlorine generated by the host defense mechanisms. MsrPQ is essential for the maintenance of envelope integrity under bleach stress, rescuing a wide series of structurally unrelated periplasmic proteins from methionine oxidation. MsrQ provides electrons for reduction to the reductase catalytic subunit MsrP, using the quinone pool of the respiratory chain. The chain is Protein-methionine-sulfoxide reductase heme-binding subunit MsrQ from Ralstonia nicotianae (strain ATCC BAA-1114 / GMI1000) (Ralstonia solanacearum).